The sequence spans 339 residues: Anthranilate phosphoribosyltransferase (339 aa).

Residues G81, G84–D85, T89, N91–T94, K109–S117, and S121 contribute to the 5-phospho-alpha-D-ribose 1-diphosphate site. G81 lines the anthranilate pocket. S93 provides a ligand contact to Mg(2+). N112 is an anthranilate binding site. R167 contributes to the anthranilate binding site. Mg(2+) contacts are provided by D226 and E227.

Belongs to the anthranilate phosphoribosyltransferase family. As to quaternary structure, homodimer. Mg(2+) is required as a cofactor.

It catalyses the reaction N-(5-phospho-beta-D-ribosyl)anthranilate + diphosphate = 5-phospho-alpha-D-ribose 1-diphosphate + anthranilate. It participates in amino-acid biosynthesis; L-tryptophan biosynthesis; L-tryptophan from chorismate: step 2/5. Functionally, catalyzes the transfer of the phosphoribosyl group of 5-phosphorylribose-1-pyrophosphate (PRPP) to anthranilate to yield N-(5'-phosphoribosyl)-anthranilate (PRA). The polypeptide is Anthranilate phosphoribosyltransferase (Persephonella marina (strain DSM 14350 / EX-H1)).